The chain runs to 602 residues: Elongation factor 4 (602 aa).

Residues Asp5–Lys187 enclose the tr-type G domain. GTP-binding positions include Asp17–Thr22 and Asn134–Asp137.

The protein belongs to the TRAFAC class translation factor GTPase superfamily. Classic translation factor GTPase family. LepA subfamily.

The protein localises to the cell inner membrane. The enzyme catalyses GTP + H2O = GDP + phosphate + H(+). Its function is as follows. Required for accurate and efficient protein synthesis under certain stress conditions. May act as a fidelity factor of the translation reaction, by catalyzing a one-codon backward translocation of tRNAs on improperly translocated ribosomes. Back-translocation proceeds from a post-translocation (POST) complex to a pre-translocation (PRE) complex, thus giving elongation factor G a second chance to translocate the tRNAs correctly. Binds to ribosomes in a GTP-dependent manner. In Zymomonas mobilis subsp. mobilis (strain ATCC 31821 / ZM4 / CP4), this protein is Elongation factor 4.